Reading from the N-terminus, the 367-residue chain is Glutamate 5-kinase (367 aa).

Lysine 8 provides a ligand contact to ATP. Substrate is bound by residues serine 49, aspartate 136, and asparagine 148. ATP is bound by residues 168–169 (TD) and 210–216 (TGGMVTK). Positions 275–353 (AGKLYLDEGA…REISTILGYA (79 aa)) constitute a PUA domain.

It belongs to the glutamate 5-kinase family.

It localises to the cytoplasm. The catalysed reaction is L-glutamate + ATP = L-glutamyl 5-phosphate + ADP. Its pathway is amino-acid biosynthesis; L-proline biosynthesis; L-glutamate 5-semialdehyde from L-glutamate: step 1/2. Its function is as follows. Catalyzes the transfer of a phosphate group to glutamate to form L-glutamate 5-phosphate. The polypeptide is Glutamate 5-kinase (Nostoc punctiforme (strain ATCC 29133 / PCC 73102)).